The primary structure comprises 366 residues: Erythronate-4-phosphate dehydrogenase (366 aa).

Substrate-binding residues include Ser-46 and Thr-67. 2 residues coordinate NAD(+): Asp-147 and Thr-175. Residue Arg-208 is part of the active site. Asp-228 contacts NAD(+). Glu-233 is an active-site residue. His-250 serves as the catalytic Proton donor. Gly-253 is a binding site for NAD(+). A substrate-binding site is contributed by Tyr-254.

It belongs to the D-isomer specific 2-hydroxyacid dehydrogenase family. PdxB subfamily. Homodimer.

The protein resides in the cytoplasm. The catalysed reaction is 4-phospho-D-erythronate + NAD(+) = (R)-3-hydroxy-2-oxo-4-phosphooxybutanoate + NADH + H(+). Its pathway is cofactor biosynthesis; pyridoxine 5'-phosphate biosynthesis; pyridoxine 5'-phosphate from D-erythrose 4-phosphate: step 2/5. In terms of biological role, catalyzes the oxidation of erythronate-4-phosphate to 3-hydroxy-2-oxo-4-phosphonooxybutanoate. This is Erythronate-4-phosphate dehydrogenase from Coxiella burnetii (strain RSA 331 / Henzerling II).